The following is a 72-amino-acid chain: Cell division protein ZapB (72 aa).

Positions 2–72 form a coiled coil; it reads SLEILDQLEG…RSLLGQIDNV (71 aa). Residues 34-57 form a disordered region; it reads NQQAQQANDELRSENEQLKGEHNN. A compositionally biased stretch (basic and acidic residues) spans 42-57; sequence DELRSENEQLKGEHNN.

This sequence belongs to the ZapB family. In terms of assembly, homodimer. The ends of the coiled-coil dimer bind to each other, forming polymers. Interacts with FtsZ.

The protein localises to the cytoplasm. In terms of biological role, non-essential, abundant cell division factor that is required for proper Z-ring formation. It is recruited early to the divisome by direct interaction with FtsZ, stimulating Z-ring assembly and thereby promoting cell division earlier in the cell cycle. Its recruitment to the Z-ring requires functional FtsA or ZipA. The polypeptide is Cell division protein ZapB (Mannheimia succiniciproducens (strain KCTC 0769BP / MBEL55E)).